A 205-amino-acid polypeptide reads, in one-letter code: Small ribosomal subunit protein uS4 (205 aa).

Residues M1 to K44 form a disordered region. The region spanning S94 to K173 is the S4 RNA-binding domain.

It belongs to the universal ribosomal protein uS4 family. In terms of assembly, part of the 30S ribosomal subunit. Contacts protein S5. The interaction surface between S4 and S5 is involved in control of translational fidelity.

Functionally, one of the primary rRNA binding proteins, it binds directly to 16S rRNA where it nucleates assembly of the body of the 30S subunit. With S5 and S12 plays an important role in translational accuracy. This is Small ribosomal subunit protein uS4 from Maricaulis maris (strain MCS10) (Caulobacter maris).